Here is a 260-residue protein sequence, read N- to C-terminus: Glutamate racemase (260 aa).

Substrate is bound by residues 7 to 8 and 39 to 40; these read DS and YG. Cysteine 71 functions as the Proton donor/acceptor in the catalytic mechanism. 72–73 lines the substrate pocket; sequence NT. The active-site Proton donor/acceptor is the cysteine 182. 183–184 provides a ligand contact to substrate; it reads TH.

Belongs to the aspartate/glutamate racemases family.

The enzyme catalyses L-glutamate = D-glutamate. It participates in cell wall biogenesis; peptidoglycan biosynthesis. In terms of biological role, provides the (R)-glutamate required for cell wall biosynthesis. This Sulfurihydrogenibium sp. (strain YO3AOP1) protein is Glutamate racemase.